The primary structure comprises 271 residues: Probable CAAX prenyl protease 2 (271 aa).

2 consecutive transmembrane segments (helical) span residues 3 to 23 (VYLISFFFTAIYVVSLYTFPV) and 42 to 62 (CISVLLASSVCCILTRLIIGP). Active-site proton donor/acceptor residues include E126 and H160. Helical transmembrane passes span 174 to 194 (AYIAAALQTVVQFSYTTVFGW) and 236 to 256 (IYYTLLLLGVLIFYMTWGITD).

The protein belongs to the peptidase U48 family.

The protein resides in the endoplasmic reticulum membrane. The enzyme catalyses Hydrolyzes the peptide bond -P2-(S-farnesyl or geranylgeranyl)C-P1'-P2'-P3'-COOH where P1' and P2' are amino acids with aliphatic sidechains and P3' is any C-terminal residue.. In terms of biological role, protease involved in the processing of a variety of prenylated proteins containing the C-terminal CAAX motif, where C is a cysteine modified with an isoprenoid lipid, A is an aliphatic amino acid and X is any C-terminal amino acid. Proteolytically removes the C-terminal three residues of farnesylated proteins, leaving the prenylated cysteine as the new C-terminus. The chain is Probable CAAX prenyl protease 2 from Schizosaccharomyces pombe (strain 972 / ATCC 24843) (Fission yeast).